A 740-amino-acid chain; its full sequence is Vertnin (740 aa).

Disordered stretches follow at residues 485 to 506 (EAGEEETGKAGSGAPLTSRGLI), 560 to 616 (PGMQ…DQNV), and 653 to 673 (TQSQPHSGSLPSQTLAEAPGG). A compositionally biased stretch (basic and acidic residues) spans 578–604 (QKPEGRQKPEEQQKPEGRQKPEGRQKP). Polar residues predominate over residues 653–667 (TQSQPHSGSLPSQTL).

This sequence belongs to the vertnin family.

The protein resides in the nucleus. Functionally, acts as a transcription factor that regulates development of thoracic vertebrae. This Mus musculus (Mouse) protein is Vertnin (Vrtn).